Reading from the N-terminus, the 267-residue chain is NAD kinase (267 aa).

Asp45 (proton acceptor) is an active-site residue. Residues 45–46 (DG), 121–122 (NE), Lys147, Asp149, 160–165 (TAYSKS), and Ala184 each bind NAD(+).

This sequence belongs to the NAD kinase family. Requires a divalent metal cation as cofactor.

Its subcellular location is the cytoplasm. The catalysed reaction is NAD(+) + ATP = ADP + NADP(+) + H(+). Functionally, involved in the regulation of the intracellular balance of NAD and NADP, and is a key enzyme in the biosynthesis of NADP. Catalyzes specifically the phosphorylation on 2'-hydroxyl of the adenosine moiety of NAD to yield NADP. This is NAD kinase from Lactobacillus gasseri (strain ATCC 33323 / DSM 20243 / BCRC 14619 / CIP 102991 / JCM 1131 / KCTC 3163 / NCIMB 11718 / NCTC 13722 / AM63).